We begin with the raw amino-acid sequence, 423 residues long: GPI mannosyltransferase 2 (423 aa).

The next 9 helical transmembrane spans lie at Leu-7–Gly-27, Val-102–Tyr-122, Ile-128–Thr-148, Ala-151–Ile-171, Thr-191–Phe-211, Phe-228–Val-248, Leu-298–Val-318, Pro-333–Phe-353, and Tyr-400–Tyr-420.

It belongs to the PIGV family.

The protein resides in the endoplasmic reticulum membrane. The protein operates within glycolipid biosynthesis; glycosylphosphatidylinositol-anchor biosynthesis. In terms of biological role, mannosyltransferase involved in glycosylphosphatidylinositol-anchor biosynthesis. Transfers the second mannose to the glycosylphosphatidylinositol during GPI precursor assembly. This Cryptococcus neoformans var. neoformans serotype D (strain B-3501A) (Filobasidiella neoformans) protein is GPI mannosyltransferase 2 (GPI18).